We begin with the raw amino-acid sequence, 208 residues long: ATP-dependent Clp protease proteolytic subunit (208 aa).

Residue Ser-107 is the Nucleophile of the active site. Residue His-132 is part of the active site.

The protein belongs to the peptidase S14 family. In terms of assembly, fourteen ClpP subunits assemble into 2 heptameric rings which stack back to back to give a disk-like structure with a central cavity, resembling the structure of eukaryotic proteasomes.

The protein resides in the cytoplasm. The catalysed reaction is Hydrolysis of proteins to small peptides in the presence of ATP and magnesium. alpha-casein is the usual test substrate. In the absence of ATP, only oligopeptides shorter than five residues are hydrolyzed (such as succinyl-Leu-Tyr-|-NHMec, and Leu-Tyr-Leu-|-Tyr-Trp, in which cleavage of the -Tyr-|-Leu- and -Tyr-|-Trp bonds also occurs).. Functionally, cleaves peptides in various proteins in a process that requires ATP hydrolysis. Has a chymotrypsin-like activity. Plays a major role in the degradation of misfolded proteins. The chain is ATP-dependent Clp protease proteolytic subunit from Methylorubrum populi (strain ATCC BAA-705 / NCIMB 13946 / BJ001) (Methylobacterium populi).